Reading from the N-terminus, the 168-residue chain is Disulfide bond formation protein B 2 (168 aa).

The Cytoplasmic portion of the chain corresponds to methionine 1–phenylalanine 9. Residues phenylalanine 10–histidine 26 traverse the membrane as a helical segment. Residues leucine 27–leucine 44 lie on the Periplasmic side of the membrane. An intrachain disulfide couples cysteine 36 to cysteine 39. Residues methionine 45 to proline 61 form a helical membrane-spanning segment. Residues alanine 62 to arginine 67 are Cytoplasmic-facing. Residues alanine 68 to glycine 85 traverse the membrane as a helical segment. The Periplasmic portion of the chain corresponds to arginine 86–glutamate 140. Cysteine 100 and cysteine 126 form a disulfide bridge. The chain crosses the membrane as a helical span at residues tryptophan 141–alanine 159. Residues tyrosine 160–alanine 168 lie on the Cytoplasmic side of the membrane.

It belongs to the DsbB family.

It is found in the cell inner membrane. In terms of biological role, required for disulfide bond formation in some periplasmic proteins. Acts by oxidizing the DsbA protein. The chain is Disulfide bond formation protein B 2 from Pseudomonas entomophila (strain L48).